Reading from the N-terminus, the 636-residue chain is MEKAVNDGSHSEELFCHLKTISEKEDLPRCTSESHLSCLKQDILNEKTELEATLKEAELVTHSVELLLPLFKDTIEKINFENANLSALNLKISEQKEILIKELDTFKSVKLALEHLLRKRDYKQTGDNLSSMLLENLTDNESENTNLKKKVFEKEAHIQELSCLFQSEKANTLKANRFSQSVKVVHERLQIQIHKREAENDKLKEYVKSLETKIAKWNLQSRMNKNEAIVMKEASRQKTVALKKASKVYKQRLDHFTGAIEKLTSQIRDQEAKLSETISASNAWKSHYEKIVIEKTELEVQIETMKKQIINLLEDLKKMEDHGKNSCEEILRKVHSIEYENETLNLENTKLKLRFPCRITESKNMNILIVLDMLCYISSEKTTLAALKDEVVSVENELSELQEVEKKQKTLIEMYKTQVQKLQEAAEIVKSRCENLLHKNNQITKTKNKNVEKMRGQMESHLKELERVCDSLTAAERRLHECQESLQCCKGKCADQEHTIRELQGQVDGNHNLLTKLSLEEENCLIQLKCENLQQKLEQMDAENKELEKKLANQEECLKHSNLKFKEKSAEYTALARQLEAALEEGRQKVAEEIEKMSSRESALQIKILDLETELRKKNEEQNQLVCKMNSDPETP.

Coiled coils occupy residues 36–97 (LSCL…EQKE), 141–220 (ESEN…WNLQ), 249–325 (YKQR…HGKN), 377–484 (ISSE…ECQE), and 519–631 (LEEE…KMNS).

The protein belongs to the ODF2 family. Mainly expressed in trachea and testis. Not detected in bone marrow, bladder, leukocytes. Only weakly detected in tongue, stomach, brain and ovaries.

It is found in the cytoplasm. It localises to the cytoskeleton. The protein resides in the microtubule organizing center. Its subcellular location is the centrosome. The protein localises to the centriole. It is found in the centriolar satellite. It localises to the cilium basal body. Acts as a suppressor of ciliogenesis, specifically, the initiation of ciliogenesis. The chain is Protein BCAP from Homo sapiens (Human).